The following is a 386-amino-acid chain: MNIHEYQGKAVLRSYGVSVPNGKVAFTVEEAVEAAKELGTDVCVVKAQIHAGGRGKAGGVKVAKNLDEVRTYAESILGTTLVTHQTGPEGKEVKRLLIEEGCDIKKEYYVGLVLDRATSQVVLMASEEGGTEIEEVAEKTPEKIFKEYIDPAVGLQGFQARRIAFNIHIPKELVGQAVKFMMGLYRAFIEKDCSIAEINPLVTTGEGKVMALDAKLNFDSNALYRHKDILELRDLDEEDSKEIEASKYDLNYIPLDGNIGCMVNGAGLAMATMDIIKHYHGDPANFLDVGGGATAEKVTEAFKIILSDKNVKGIFVNIFGGIMKCDVIAEGVIEATKQVGLELPLVVRLEGTNVELGKKILNESGLNIVAAESMADGAQKIVSLVG.

The region spanning 9–244 (KAVLRSYGVS…LDEEDSKEIE (236 aa)) is the ATP-grasp domain. Residues Lys46, 53 to 55 (GRG), Glu99, Cys102, and Glu107 contribute to the ATP site. Positions 199 and 213 each coordinate Mg(2+). Residues Asn264 and 321–323 (GIM) each bind substrate.

It belongs to the succinate/malate CoA ligase beta subunit family. Heterotetramer of two alpha and two beta subunits. Mg(2+) serves as cofactor.

The catalysed reaction is succinate + ATP + CoA = succinyl-CoA + ADP + phosphate. It catalyses the reaction GTP + succinate + CoA = succinyl-CoA + GDP + phosphate. It participates in carbohydrate metabolism; tricarboxylic acid cycle; succinate from succinyl-CoA (ligase route): step 1/1. Its function is as follows. Succinyl-CoA synthetase functions in the citric acid cycle (TCA), coupling the hydrolysis of succinyl-CoA to the synthesis of either ATP or GTP and thus represents the only step of substrate-level phosphorylation in the TCA. The beta subunit provides nucleotide specificity of the enzyme and binds the substrate succinate, while the binding sites for coenzyme A and phosphate are found in the alpha subunit. This chain is Succinate--CoA ligase [ADP-forming] subunit beta, found in Bacillus cereus (strain G9842).